Here is a 189-residue protein sequence, read N- to C-terminus: Large ribosomal subunit protein uL6 (189 aa).

This sequence belongs to the universal ribosomal protein uL6 family. In terms of assembly, part of the 50S ribosomal subunit.

Functionally, this protein binds to the 23S rRNA, and is important in its secondary structure. It is located near the subunit interface in the base of the L7/L12 stalk, and near the tRNA binding site of the peptidyltransferase center. In Bacteroides thetaiotaomicron (strain ATCC 29148 / DSM 2079 / JCM 5827 / CCUG 10774 / NCTC 10582 / VPI-5482 / E50), this protein is Large ribosomal subunit protein uL6.